The following is a 293-amino-acid chain: Homoserine O-acetyltransferase (293 aa).

The Acyl-thioester intermediate role is filled by Cys-141. Substrate is bound by residues Lys-162 and Ser-190. The Proton acceptor role is filled by His-234. Glu-236 is a catalytic residue. Residue Arg-248 participates in substrate binding.

Belongs to the MetA family.

Its subcellular location is the cytoplasm. It catalyses the reaction L-homoserine + acetyl-CoA = O-acetyl-L-homoserine + CoA. The protein operates within amino-acid biosynthesis; L-methionine biosynthesis via de novo pathway; O-acetyl-L-homoserine from L-homoserine: step 1/1. Transfers an acetyl group from acetyl-CoA to L-homoserine, forming acetyl-L-homoserine. This chain is Homoserine O-acetyltransferase, found in Campylobacter jejuni subsp. jejuni serotype O:2 (strain ATCC 700819 / NCTC 11168).